Here is a 61-residue protein sequence, read N- to C-terminus: Small ribosomal subunit protein uS14 (61 aa).

Positions 24, 27, 40, and 43 each coordinate Zn(2+).

This sequence belongs to the universal ribosomal protein uS14 family. Zinc-binding uS14 subfamily. Part of the 30S ribosomal subunit. Contacts proteins S3 and S10. Requires Zn(2+) as cofactor.

In terms of biological role, binds 16S rRNA, required for the assembly of 30S particles and may also be responsible for determining the conformation of the 16S rRNA at the A site. This is Small ribosomal subunit protein uS14 from Thermoanaerobacter sp. (strain X514).